Consider the following 557-residue polypeptide: Glypican-4 (557 aa).

The first 18 residues, 1–18 (MARLGLLALLCTLAALSA), serve as a signal peptide directing secretion. Ser-357 is modified (phosphoserine). Ser-494, Ser-498, and Ser-500 each carry an O-linked (Xyl...) (glycosaminoglycan) serine glycan. A glycan (N-linked (GlcNAc...) asparagine) is linked at Asn-514. Ser-529 is lipidated: GPI-anchor amidated serine. Positions 530-557 (AGGAHAEAKPYLLAALCILFLAVQGEWR) are cleaved as a propeptide — removed in mature form.

Belongs to the glypican family. As to expression, highly expressed in developing brain and kidney.

Its subcellular location is the cell membrane. The protein localises to the secreted. It is found in the extracellular space. Its function is as follows. Cell surface proteoglycan that bears heparan sulfate. May be involved in the development of kidney tubules and of the central nervous system. The chain is Glypican-4 (Gpc4) from Mus musculus (Mouse).